The following is a 643-amino-acid chain: MKSTKMTTAQALVRFLDNQYVSFDGKEEKFVHGIFTIFGHGIVVGLGQALDENTRDLKVYQGRNEQGMAHAATAFAKQNNRRKIIACSSSIGPGAANMVTAAATATVNNIPLLLLPGDSFATRQPDPVLQQIEQSYNLGITTNDVFKPVCKYWDRVNRPEQLMSAMINAMRVLTDPAETGAVCISLPQDVQGESFEFPEYFFKKRVHKITRPLAVEEEFYECLNIIKNKKKPIIICGGGVRYSEAGDALSKFANKFNIPIGETQAGKSSIKSSDPMNLGGIGVTGNLASNIIAKDADLVIGVGTRFSDFTTASKSLFKNPDVEFVTINLSKFHASKLDSCKMVGDAKECLEYLHKLLEKENYISSYKDEIKDAKIAWKEEMKRLTNIKYEENFEPIIKFRNKESLEEFKKLTDTTITQTSALGLIRECIDDDSIIVGASGSLPGDLQRMWETESLNSYHMEYGYSCMGYEIAAGFGAKLADPEKEVYSILGDGSYLMLHSELITSIQENKKVNVLLFDNCGFGCINNLQMSNGIGNLATEFRYRNSETNKLNGKLIPIDFAKAAEGYGLKTYTAKNLEELKNALIDAKKQKVSTLIDIKVLPKTMTDGYESWWHVGLAEVSEKESVNEAFKNSKKILKGARKY.

Glu-65 contacts thiamine diphosphate. Positions 441 to 521 (SLPGDLQRMW…VNVLLFDNCG (81 aa)) are thiamine pyrophosphate binding. Positions 492 and 519 each coordinate Mg(2+).

It belongs to the TPP enzyme family. The cofactor is Mg(2+). Thiamine diphosphate is required as a cofactor.

The catalysed reaction is 3D-3,5/4-trihydroxycyclohexane-1,2-dione + H2O = 5-deoxy-D-glucuronate + H(+). The protein operates within polyol metabolism; myo-inositol degradation into acetyl-CoA; acetyl-CoA from myo-inositol: step 3/7. Its function is as follows. Involved in the cleavage of the C1-C2 bond of 3D-(3,5/4)-trihydroxycyclohexane-1,2-dione (THcHDO) to yield 5-deoxy-glucuronate (5DG). This chain is 3D-(3,5/4)-trihydroxycyclohexane-1,2-dione hydrolase, found in Clostridium botulinum (strain Alaska E43 / Type E3).